The chain runs to 403 residues: Tyrosine--tRNA ligase (403 aa).

Residues 42-51 carry the 'HIGH' region motif; that stretch reads PTAPDLHLGH. The 'KMSKS' region motif lies at 226 to 230; the sequence is KMSKS. K229 provides a ligand contact to ATP. The region spanning 339 to 400 is the S4 RNA-binding domain; that stretch reads LRLAGLLTAA…GKRNFARVLL (62 aa).

The protein belongs to the class-I aminoacyl-tRNA synthetase family. TyrS type 2 subfamily. As to quaternary structure, homodimer.

The protein localises to the cytoplasm. It catalyses the reaction tRNA(Tyr) + L-tyrosine + ATP = L-tyrosyl-tRNA(Tyr) + AMP + diphosphate + H(+). Its function is as follows. Catalyzes the attachment of tyrosine to tRNA(Tyr) in a two-step reaction: tyrosine is first activated by ATP to form Tyr-AMP and then transferred to the acceptor end of tRNA(Tyr). The polypeptide is Tyrosine--tRNA ligase (Xanthomonas euvesicatoria pv. vesicatoria (strain 85-10) (Xanthomonas campestris pv. vesicatoria)).